A 507-amino-acid polypeptide reads, in one-letter code: Transcription factor SOX-9 (507 aa).

Disordered regions lie at residues 1–67 and 160–250; these read MNLL…SEED and RLRV…AGKV. Positions 30–41 are enriched in low complexity; the sequence is SAGSPCPSGSGS. A compositionally biased stretch (polar residues) spans 42 to 52; that stretch reads DTENTRPQENT. Composition is skewed to basic and acidic residues over residues 56–67 and 160–174; these read GEPDLKKESEED and RLRV…DYKY. The segment at 63–103 is dimerization (DIM); it reads ESEEDKFPVCIREAVSQVLKGYDWTLVPMPVRVNGSSKNKP. The PQA stretch occupies residues 63–103; it reads ESEEDKFPVCIREAVSQVLKGYDWTLVPMPVRVNGSSKNKP. A Phosphoserine modification is found at Ser64. The HMG box DNA-binding region spans 105-173; it reads VKRPMNAFMV…QHKKDHPDYK (69 aa). Ser211 carries the phosphoserine modification. The segment at 224 to 307 is transactivation domain (TAM); sequence PGEHSGQSQG…LPPNGHPGVP (84 aa). 2 short sequence motifs (9aaTAD) span residues 275–284 and 290–298; these read IGELSSDVIS and DVNEFDQYL. The tract at residues 335–429 is disordered; it reads WMSKQQAPPP…PFNLPHYNPS (95 aa). Positions 341-369 are enriched in pro residues; the sequence is APPPPPQQPPQAPQAPQAPPQQQAPPQPQ. Residues 378 to 420 are compositionally biased toward polar residues; sequence HTLTTLSSEPGQSQRTHIKTEQLSPSHYSEQQQHSPQQISYSP. Residues 392–507 form a transactivation domain (TAC) region; sequence RTHIKTEQLS…QPVYTQLTRP (116 aa). Residue Lys396 forms a Glycyl lysine isopeptide (Lys-Gly) (interchain with G-Cter in ubiquitin) linkage. A 9aaTAD 3 motif is present at residues 458-466; it reads SGLYSTFTY. Residues 477–507 form a disordered region; sequence PIADTSGVPSIPQTHSPQHWEQPVYTQLTRP. Residues 483-507 show a composition bias toward polar residues; the sequence is GVPSIPQTHSPQHWEQPVYTQLTRP.

As to quaternary structure, homodimer; homodimerization is required for activity. Interacts (via C-terminus) with ZNF219; forming a complex that binds to the COL2A1 promoter and activates COL2A1 expression. Interacts with DDRGK1. Interacts with EP300/p300. Interacts with beta-catenin (CTNNB1); inhibiting CTNNB1 activity by competing with the binding sites of TCF/LEF within CTNNB1. Post-translationally, acetylated; acetylation impairs nuclear localization and ability to transactivate expression of target genes. Deacetylated by SIRT1. In terms of processing, phosphorylation at Ser-64 and Ser-211 by PKA increases transcriptional activity and may help delay chondrocyte maturation downstream of PTHLH/PTHrP signaling. Phosphorylation at either Ser-64 or Ser-211 is required for sumoylation, but phosphorylation is not dependent on sumoylation. Phosphorylated on tyrosine residues; tyrosine dephosphorylation by PTPN11/SHP2 blocks SOX9 phosphorylation by PKA and subsequent SUMOylation. Sumoylated; phosphorylation at either Ser-64 or Ser-211 is required for sumoylation. Sumoylation is induced by BMP signaling pathway. Post-translationally, ubiquitinated; ubiquitination leads to proteasomal degradation and is negatively regulated by DDRGK1.

Its subcellular location is the nucleus. In terms of biological role, transcription factor that plays a key role in chondrocytes differentiation and skeletal development. Specifically binds the 5'-ACAAAG-3' DNA motif present in enhancers and super-enhancers and promotes expression of genes important for chondrogenesis, including cartilage matrix protein-coding genes COL2A1, COL4A2, COL9A1, COL11A2 and ACAN, SOX5 and SOX6. Also binds to some promoter regions. Plays a central role in successive steps of chondrocyte differentiation. Absolutely required for precartilaginous condensation, the first step in chondrogenesis during which skeletal progenitors differentiate into prechondrocytes. Together with SOX5 and SOX6, required for overt chondrogenesis when condensed prechondrocytes differentiate into early stage chondrocytes, the second step in chondrogenesis. Later, required to direct hypertrophic maturation and block osteoblast differentiation of growth plate chondrocytes: maintains chondrocyte columnar proliferation, delays prehypertrophy and then prevents osteoblastic differentiation of chondrocytes by lowering beta-catenin (CTNNB1) signaling and RUNX2 expression. Also required for chondrocyte hypertrophy, both indirectly, by keeping the lineage fate of chondrocytes, and directly, by remaining present in upper hypertrophic cells and transactivating COL10A1 along with MEF2C. Low lipid levels are the main nutritional determinant for chondrogenic commitment of skeletal progenitor cells: when lipids levels are low, FOXO (FOXO1 and FOXO3) transcription factors promote expression of SOX9, which induces chondrogenic commitment and suppresses fatty acid oxidation. Mechanistically, helps, but is not required, to remove epigenetic signatures of transcriptional repression and deposit active promoter and enhancer marks at chondrocyte-specific genes. Acts in cooperation with the Hedgehog pathway-dependent GLI (GLI1 and GLI3) transcription factors. In addition to cartilage development, also acts as a regulator of proliferation and differentiation in epithelial stem/progenitor cells: involved in the lung epithelium during branching morphogenesis, by balancing proliferation and differentiation and regulating the extracellular matrix. Controls epithelial branching during kidney development. This Rattus norvegicus (Rat) protein is Transcription factor SOX-9.